We begin with the raw amino-acid sequence, 167 residues long: Mediator of RNA polymerase II transcription subunit 10 (167 aa).

Positions 53 to 88 (LSTHTKPQPPSQDEEQKEKQDDTPEGSANDPLLRDI) are disordered.

Belongs to the Mediator complex subunit 10 family. Component of the Mediator complex.

The protein localises to the nucleus. Functionally, component of the Mediator complex, a coactivator involved in the regulated transcription of nearly all RNA polymerase II-dependent genes. Mediator functions as a bridge to convey information from gene-specific regulatory proteins to the basal RNA polymerase II transcription machinery. Mediator is recruited to promoters by direct interactions with regulatory proteins and serves as a scaffold for the assembly of a functional preinitiation complex with RNA polymerase II and the general transcription factors. The chain is Mediator of RNA polymerase II transcription subunit 10 (nut2) from Neosartorya fischeri (strain ATCC 1020 / DSM 3700 / CBS 544.65 / FGSC A1164 / JCM 1740 / NRRL 181 / WB 181) (Aspergillus fischerianus).